The following is a 4128-amino-acid chain: MAGSGAGVRCSLLRLQETLSAADRCGAALAGHQLIRGLGQECVLSSSPAVLALQTSLVFSRDFGLLVFVRKSLNSIEFRECREEILKFLCIFLEKMGQKIAPYSVEIKNTCTSVYTKDRAAKCKIPALDLLIKLLQTFRSSRLMDEFKIGELFSKFYGELALKKKIPDTVLEKVYELLGLLGEVHPSEMINNAENLFRAFLGELKTQMTSAVREPKLPVLAGCLKGLSSLLCNFTKSMEEDPQTSREIFNFVLKAIRPQIDLKRYAVPSAGLRLFALHASQFSTCLLDNYVSLFEVLLKWCAHTNVELKKAALSALESFLKQVSNMVAKNAEMHKNKLQYFMEQFYGIIRNVDSNNKELSIAIRGYGLFAGPCKVINAKDVDFMYVELIQRCKQMFLTQTDTGDDRVYQMPSFLQSVASVLLYLDTVPEVYTPVLEHLVVMQIDSFPQYSPKMQLVCCRAIVKVFLALAAKGPVLRNCISTVVHQGLIRICSKPVVLPKGPESESEDHRASGEVRTGKWKVPTYKDYVDLFRHLLSSDQMMDSILADEAFFSVNSSSESLNHLLYDEFVKSVLKIVEKLDLTLEIQTVGEQENGDEAPGVWMIPTSDPAANLHPAKPKDFSAFINLVEFCREILPEKQAEFFEPWVYSFSYELILQSTRLPLISGFYKLLSITVRNAKKIKYFEGVSPKSLKHSPEDPEKYSCFALFVKFGKEVAVKMKQYKDELLASCLTFLLSLPHNIIELDVRAYVPALQMAFKLGLSYTPLAEVGLNALEEWSIYIDRHVMQPYYKDILPCLDGYLKTSALSDETKNNWEVSALSRAAQKGFNKVVLKHLKKTKNLSSNEAISLEEIRIRVVQMLGSLGGQINKNLLTVTSSDEMMKSYVAWDREKRLSFAVPFREMKPVIFLDVFLPRVTELALTASDRQTKVAACELLHSMVMFMLGKATQMPEGGQGAPPMYQLYKRTFPVLLRLACDVDQVTRQLYEPLVMQLIHWFTNNKKFESQDTVALLEAILDGIVDPVDSTLRDFCGRCIREFLKWSIKQITPQQQEKSPVNTKSLFKRLYSLALHPNAFKRLGASLAFNNIYREFREEESLVEQFVFEALVIYMESLALAHADEKSLGTIQQCCDAIDHLCRIIEKKHVSLNKAKKRRLPRGFPPSASLCLLDLVKWLLAHCGRPQTECRHKSIELFYKFVPLLPGNRSPNLWLKDVLKEEGVSFLINTFEGGGCGQPSGILAQPTLLYLRGPFSLQATLCWLDLLLAALECYNTFIGERTVGALQVLGTEAQSSLLKAVAFFLESIAMHDIIAAEKCFGTGAAGNRTSPQEGERYNYSKCTVVVRIMEFTTTLLNTSPEGWKLLKKDLCNTHLMRVLVQTLCEPASIGFNIGDVQVMAHLPDVCVNLMKALKMSPYKDILETHLREKITAQSIEELCAVNLYGPDAQVDRSRLAAVVSACKQLHRAGLLHNILPSQSTDLHHSVGTELLSLVYKGIAPGDERQCLPSLDLSCKQLASGLLELAFAFGGLCERLVSLLLNPAVLSTASLGSSQGSVIHFSHGEYFYSLFSETINTELLKNLDLAVLELMQSSVDNTKMVSAVLNGMLDQSFRERANQKHQGLKLATTILQHWKKCDSWWAKDSPLETKMAVLALLAKILQIDSSVSFNTSHGSFPEVFTTYISLLADTKLDLHLKGQAVTLLPFFTSLTGGSLEELRRVLEQLIVAHFPMQSREFPPGTPRFNNYVDCMKKFLDALELSQSPMLLELMTEVLCREQQHVMEELFQSSFRRIARRGSCVTQVGLLESVYEMFRKDDPRLSFTRQSFVDRSLLTLLWHCSLDALREFFSTIVVDAIDVLKSRFTKLNESTFDTQITKKMGYYKILDVMYSRLPKDDVHAKESKINQVFHGSCITEGNELTKTLIKLCYDAFTENMAGENQLLERRRLYHCAAYNCAISVICCVFNELKFYQGFLFSEKPEKNLLIFENLIDLKRRYNFPVEVEVPMERKKKYIEIRKEAREAANGDSDGPSYMSSLSYLADSTLSEEMSQFDFSTGVQSYSYSSQDPRPATGRFRRREQRDPTVHDDVLELEMDELNRHECMAPLTALVKHMHRSLGPPQGEEDSVPRDLPSWMKFLHGKLGNPIVPLNIRLFLAKLVINTEEVFRPYAKHWLSPLLQLAASENNGGEGIHYMVVEIVATILSWTGLATPTGVPKDEVLANRLLNFLMKHVFHPKRAVFRHNLEIIKTLVECWKDCLSIPYRLIFEKFSGKDPNSKDNSVGIQLLGIVMANDLPPYDPQCGIQSSEYFQALVNNMSFVRYKEVYAAAAEVLGLILRYVMERKNILEESLCELVAKQLKQHQNTMEDKFIVCLNKVTKSFPPLADRFMNAVFFLLPKFHGVLKTLCLEVVLCRVEGMTELYFQLKSKDFVQVMRHRDDERQKVCLDIIYKMMPKLKPVELRELLNPVVEFVSHPSTTCREQMYNILMWIHDNYRDPESETDNDSQEIFKLAKDVLIQGLIDENPGLQLIIRNFWSHETRLPSNTLDRLLALNSLYSPKIEVHFLSLATNFLLEMTSMSPDYPNPMFEHPLSECEFQEYTIDSDWRFRSTVLTPMFVETQASQGTLQTRTQEGSLSARWPVAGQIRATQQQHDFTLTQTADGRSSFDWLTGSSTDPLVDHTSPSSDSLLFAHKRSERLQRAPLKSVGPDFGKKRLGLPGDEVDNKVKGAAGRTDLLRLRRRFMRDQEKLSLMYARKGVAEQKREKEIKSELKMKQDAQVVLYRSYRHGDLPDIQIKHSSLITPLQAVAQRDPIIAKQLFSSLFSGILKEMDKFKTLSEKNNITQKLLQDFNRFLNTTFSFFPPFVSCIQDISCQHAALLSLDPAAVSAGCLASLQQPVGIRLLEEALLRLLPAELPAKRVRGKARLPPDVLRWVELAKLYRSIGEYDVLRGIFTSEIGTKQITQSALLAEARSDYSEAAKQYDEALNKQDWVDGEPTEAEKDFWELASLDCYNHLAEWKSLEYCSTASIDSENPPDLNKIWSEPFYQETYLPYMIRSKLKLLLQGEADQSLLTFIDKAMHGELQKAILELHYSQELSLLYLLQDDVDRAKYYIQNGIQSFMQNYSSIDVLLHQSRLTKLQSVQALTEIQEFISFISKQGNLSSQVPLKRLLNTWTNRYPDAKMDPMNIWDDIITNRCFFLSKIEEKLTPLPEDNSMNVDQDGDPSDRMEVQEQEEDISSLIRSCKFSMKMKMIDSARKQNNFSLAMKLLKELHKESKTRDDWLVSWVQSYCRLSHCRSRSQGCSEQVLTVLKTVSLLDENNVSSYLSKNILAFRDQNILLGTTYRIIANALSSEPACLAEIEEDKARRILELSGSSSEDSEKVIAGLYQRAFQHLSEAVQAAEEEAQPPSWSCGPAAGVIDAYMTLADFCDQQLRKEEENASVIDSAELQAYPALVVEKMLKALKLNSNEARLKFPRLLQIIERYPEETLSLMTKEISSVPCWQFISWISHMVALLDKDQAVAVQHSVEEITDNYPQAIVYPFIISSESYSFKDTSTGHKNKEFVARIKSKLDQGGVIQDFINALDQLSNPELLFKDWSNDVRAELAKTPVNKKNIEKMYERMYAALGDPKAPGLGAFRRKFIQTFGKEFDKHFGKGGSKLLRMKLSDFNDITNMLLLKMNKDSKPPGNLKECSPWMSDFKVEFLRNELEIPGQYDGRGKPLPEYHVRIAGFDERVTVMASLRRPKRIIIRGHDEREHPFLVKGGEDLRQDQRVEQLFQVMNGILAQDSACSQRALQLRTYSVVPMTSRLGLIEWLENTVTLKDLLLNTMSQEEKAAYLSDPRAPPCEYKDWLTKMSGKHDVGAYMLMYKGANRTETVTSFRKRESKVPADLLKRAFVRMSTSPEAFLALRSHFASSHALICISHWILGIGDRHLNNFMVAMETGGVIGIDFGHAFGSATQFLPVPELMPFRLTRQFINLMLPMKETGLMYSIMVHALRAFRSDPGLLTNTMDVFVKEPSFDWKNFEQKMLKKGGSWIQEINVAEKNWYPRQKICYAKRKLAGANPAVITCDELLLGHEKAPAFRDYVAVARGSKDHNIRAQEPESGLSEETQVKCLMDQATDPNILGRTWEGWEPWM.

N6-acetyllysine is present on lysine 117. Residues 288 to 323 (DNYVSLFEVLLKWCAHTNVELKKAALSALESFLKQV) form an HEAT 1 repeat. Phosphoserine occurs at positions 511 and 687. Lysine 828 bears the N6-acetyllysine mark. 2 positions are modified to phosphoserine: serine 841 and serine 893. An HEAT 2 repeat occupies 1004 to 1040 (QDTVALLEAILDGIVDPVDSTLRDFCGRCIREFLKWS). A Phosphoserine modification is found at serine 1065. N6-acetyllysine is present on lysine 1209. The interval 1503 to 1538 (LDLSCKQLASGLLELAFAFGGLCERLVSLLLNPAVL) is interaction with C1D. The leucine-zipper stretch occupies residues 1503-1538 (LDLSCKQLASGLLELAFAFGGLCERLVSLLLNPAVL). Residues 1723–1756 (PMQSREFPPGTPRFNNYVDCMKKFLDALELSQSP) form a TPR 1 repeat. Lysine 1970 carries the post-translational modification N6-acetyllysine. The segment at 2050 to 2073 (QSYSYSSQDPRPATGRFRRREQRD) is disordered. At serine 2056 the chain carries Phosphoserine; by autocatalysis. Lysine 2259 bears the N6-acetyllysine mark. The tract at residues 2436–3212 (LDIIYKMMPK…DNSMNVDQDG (777 aa)) is KIP-binding. Threonine 2535 carries the post-translational modification Phosphothreonine. Position 2609 is a phosphothreonine; by autocatalysis (threonine 2609). A Phosphoserine; by autocatalysis modification is found at serine 2612. Threonine 2638 and threonine 2647 each carry phosphothreonine; by autocatalysis. Residues 2737–2765 (EKLSLMYARKGVAEQKREKEIKSELKMKQ) are may split the end of the DNA molecule, with the two strands separating around the region. Position 2789 is a phosphoserine (serine 2789). Residues 2906–3539 (PAKRVRGKAR…VYPFIISSES (634 aa)) form the FAT domain. TPR repeat units follow at residues 2920–2948 (VLRW…SEIG) and 2949–2982 (TKQI…QDWV). Residues 3200–3222 (LPEDNSMNVDQDGDPSDRMEVQE) form a disordered region. Serine 3205 bears the Phosphoserine mark. N6-acetyllysine is present on residues lysine 3241, lysine 3260, lysine 3621, lysine 3638, and lysine 3642. The PI3K/PI4K catalytic domain occupies 3722-4053 (FDERVTVMAS…ICYAKRKLAG (332 aa)). Residues 3728 to 3734 (VMASLRR) are G-loop. Residues serine 3731 and serine 3821 each carry the phosphoserine modification. A catalytic loop region spans residues 3919–3927 (GIGDRHLNN). The activation loop stretch occupies residues 3939–3964 (GIDFGHAFGSATQFLPVPELMPFRLT). A Phosphoserine modification is found at serine 4026. The 33-residue stretch at 4096-4128 (SGLSEETQVKCLMDQATDPNILGRTWEGWEPWM) folds into the FATC domain.

Belongs to the PI3/PI4-kinase family. In terms of assembly, DNA-PK is a heterotrimer of PRKDC and the Ku dimer (composed of XRCC6/Ku70 and XRCC5/Ku86). Formation of this complex may be promoted by interaction with ILF3. Component of the core long-range non-homologous end joining (NHEJ) complex (also named DNA-PK complex) composed of PRKDC, LIG4, XRCC4, XRCC6/Ku70, XRCC5/Ku86 and NHEJ1/XLF. Additional component of the NHEJ complex includes PAXX. Following autophosphorylation, PRKDC dissociates from DNA. Interacts with DNA-PKcs-interacting protein (KIP) with the region upstream the kinase domain. PRKDC alone also interacts with and phosphorylates DCLRE1C, thereby activating the latent endonuclease activity of this protein. Interacts with C1D. Interacts with TTI1 and TELO2. Interacts with CIB1. Interacts with SETX. Interacts with NR4A3; the DNA-dependent protein kinase complex DNA-PK phosphorylates and activates NR4A3 and prevents NR4A3 ubiquitination and degradation. Interacts with BRAT1. Part of the HDP-RNP complex composed of at least HEXIM1, PRKDC, XRCC5, XRCC6, paraspeckle proteins (SFPQ, NONO, PSPC1, RBM14, and MATR3) and NEAT1 RNA. Interacts with KAT5. Autophosphorylated at two clusters, the T2609 cluster and the S2056 cluster. Autophosphorylated on Ser-2056, Thr-2609, Thr-2638 and Thr-2647. Ser-2056 and Thr-2609 are DNA damage-inducible phosphorylation sites (inducible with ionizing radiation, IR) dephosphorylated by PPP5C. Autophosphorylation induces a conformational change that leads to remodeling of the DNA-PK complex, requisite for efficient end processing and DNA repair. Autophosphorylation in trans within DNA-PK complexes loaded on DNA ends leads to the dissociation of PRKDC from DNA and the transition into the short-range NHEJ complex. Autophosphorylation of the T2609 cluster is required for hematopoietic development and protein synthesis in erythrocytes precursors. In terms of processing, S-nitrosylated by GAPDH. Post-translationally, polyubiquitinated by RNF144A, leading to proteasomal degradation.

The protein resides in the nucleus. Its subcellular location is the nucleolus. The protein localises to the cytoplasm. It localises to the cytosol. It carries out the reaction L-seryl-[protein] + ATP = O-phospho-L-seryl-[protein] + ADP + H(+). The enzyme catalyses L-threonyl-[protein] + ATP = O-phospho-L-threonyl-[protein] + ADP + H(+). Activity seems to be attenuated by autophosphorylation. Binding to the SL1 region of U3 small nucleolar RNA promotes auto-phosphorylation activity. Inhibited by wortmannin. In terms of biological role, serine/threonine-protein kinase that acts as a molecular sensor for DNA damage. Involved in DNA non-homologous end joining (NHEJ) required for double-strand break (DSB) repair and V(D)J recombination. Must be bound to DNA to express its catalytic properties. Promotes processing of hairpin DNA structures in V(D)J recombination by activation of the hairpin endonuclease artemis (DCLRE1C). Recruited by XRCC5 and XRCC6 to DNA ends and is required to (1) protect and align broken ends of DNA, thereby preventing their degradation, (2) and sequester the DSB for repair by NHEJ. Acts as a scaffold protein to aid the localization of DNA repair proteins to the site of damage. The assembly of the DNA-PK complex at DNA ends is also required for the NHEJ ligation step. Found at the ends of chromosomes, suggesting a further role in the maintenance of telomeric stability and the prevention of chromosomal end fusion. Also involved in modulation of transcription. As part of the DNA-PK complex, involved in the early steps of ribosome assembly by promoting the processing of precursor rRNA into mature 18S rRNA in the small-subunit processome. Binding to U3 small nucleolar RNA, recruits PRKDC and XRCC5/Ku86 to the small-subunit processome. Recognizes the substrate consensus sequence [ST]-Q. Phosphorylates 'Ser-139' of histone variant H2AX, thereby regulating DNA damage response mechanism. Phosphorylates ASF1A, DCLRE1C, c-Abl/ABL1, histone H1, HSPCA, c-jun/JUN, p53/TP53, PARP1, POU2F1, DHX9, FH, SRF, NHEJ1/XLF, XRCC1, XRCC4, XRCC5, XRCC6, WRN, MYC and RFA2. Can phosphorylate C1D not only in the presence of linear DNA but also in the presence of supercoiled DNA. Ability to phosphorylate p53/TP53 in the presence of supercoiled DNA is dependent on C1D. Acts as a regulator of the phosphatidylinositol 3-kinase/protein kinase B signal transduction by mediating phosphorylation of 'Ser-473' of protein kinase B (PKB/AKT1, PKB/AKT2, PKB/AKT3), promoting their activation. Contributes to the determination of the circadian period length by antagonizing phosphorylation of CRY1 'Ser-588' and increasing CRY1 protein stability, most likely through an indirect mechanism. Plays a role in the regulation of DNA virus-mediated innate immune response by assembling into the HDP-RNP complex, a complex that serves as a platform for IRF3 phosphorylation and subsequent innate immune response activation through the cGAS-STING pathway. Also regulates the cGAS-STING pathway by catalyzing phosphorylation of CGAS, thereby impairing CGAS oligomerization and activation. Also regulates the cGAS-STING pathway by mediating phosphorylation of PARP1. This Homo sapiens (Human) protein is DNA-dependent protein kinase catalytic subunit (PRKDC).